The sequence spans 585 residues: MLLEAIFHEAKGSYAYPISETQLRVRLRAKKGDVVRCEVLYADRYASPEEELAHALAGKAGSDERFDYFEALLECSTKRVKYVFLLTGPQGEAVYFGETGFSAERSKAGVFQYAYIHRSEVFTTPEWAKEAVIYQIFPERFANGDPSNDPPGTEQWAKDARPRHDSFYGGDLKGVIDRLPYLEELGVTALYFTPIFASPSHHKYDTADYLAIDPQFGDLPTFRRLVDEAHRRGIKIILDAVFNHAGDQFFAFRDVLQKGEQSRYKDWFFIEDFPVSKTSRTNYETFAVQVPAMPKLRTENPEVKEYLFDVARFWMEQGIDGWRLDVANEVDHAFWREFRRLVKSLNPDALIVGEIWHDASGWLMGDQFDSVMNYLFRESVIRFFATGEIHAERFDAELTRARMLYPEQAAQGLWNLLDSHDTERFLTSCGGNEAKFRLAVLFQMTYLGTPLIYYGDEIGMAGATDPDCRRPMIWEEKEQNRGLFEFYKELIRLRHRLASLTRGNVRSWHADKQANLYAFVRTVQDQHVGVVLNNRGEKQTVLLQVPESGGKTWLDCLTGEEVHGKQGQLKLTLRPYQGMILWNGR.

Asn-143, Asp-145, Asn-148, Asp-149, Gly-169, and Asp-171 together coordinate Ca(2+). Positions 244 and 323 each coordinate substrate. The active-site Nucleophile is Asp-325. Residue Glu-354 is the Proton donor of the active site. Residues 420-421, Asp-465, and Arg-469 each bind substrate; that span reads HD.

This sequence belongs to the glycosyl hydrolase 13 family. In terms of assembly, monomer. Requires Ca(2+) as cofactor.

It carries out the reaction Hydrolysis of pullulan to panose (6-alpha-D-glucosylmaltose).. Functionally, hydrolyzes pullulan efficiently but only a small amount of starch. Endohydrolysis of 1,4-alpha-glucosidic linkages in pullulan to form panose. Also cleaves (1-6)-alpha-glucosidic linkages to form maltotriose. This Thermoactinomyces vulgaris protein is Neopullulanase 2 (tvaII).